Here is a 255-residue protein sequence, read N- to C-terminus: Aliphatic sulfonates import ATP-binding protein SsuB (255 aa).

Positions 12-233 (LLLNAVSKHY…RLGSVRLAEL (222 aa)) constitute an ABC transporter domain. Residue 44 to 51 (GRSGGGKS) coordinates ATP.

The protein belongs to the ABC transporter superfamily. Aliphatic sulfonates importer (TC 3.A.1.17.2) family. In terms of assembly, the complex is composed of two ATP-binding proteins (SsuB), two transmembrane proteins (SsuC) and a solute-binding protein (SsuA).

It localises to the cell inner membrane. The catalysed reaction is ATP + H2O + aliphatic sulfonate-[sulfonate-binding protein]Side 1 = ADP + phosphate + aliphatic sulfonateSide 2 + [sulfonate-binding protein]Side 1.. Part of the ABC transporter complex SsuABC involved in aliphatic sulfonates import. Responsible for energy coupling to the transport system. In Shigella flexneri, this protein is Aliphatic sulfonates import ATP-binding protein SsuB.